A 347-amino-acid polypeptide reads, in one-letter code: Protein phosphatase 2C homolog 1 (347 aa).

The segment at 1–41 (MKGSHPNAGSLLEPLHKLNPFSENSTSGHRKNASDHSADGE) is disordered. Residues 32–41 (NASDHSADGE) are compositionally biased toward basic and acidic residues. The PPM-type phosphatase domain occupies 71-323 (LAGLMEDKNQ…DNITCIVVNL (253 aa)). Positions 109, 110, 275, and 314 each coordinate Mn(2+).

It belongs to the PP2C family. In terms of assembly, monomer. It depends on Mg(2+) as a cofactor. Requires Mn(2+) as cofactor.

The catalysed reaction is O-phospho-L-seryl-[protein] + H2O = L-seryl-[protein] + phosphate. It carries out the reaction O-phospho-L-threonyl-[protein] + H2O = L-threonyl-[protein] + phosphate. Its function is as follows. Serine and threonine phosphatase. Has a specialized role in the heat shock response. May be responsible for the dephosphorylation of hsp90. The polypeptide is Protein phosphatase 2C homolog 1 (ptc1) (Schizosaccharomyces pombe (strain 972 / ATCC 24843) (Fission yeast)).